The chain runs to 637 residues: Extracellular metalloproteinase 10 (637 aa).

The N-terminal stretch at M1–A19 is a signal peptide. A propeptide spanning residues H20 to H245 is cleaved from the precursor. N-linked (GlcNAc...) asparagine glycosylation is present at N282. Residue H429 coordinates Zn(2+). E430 is an active-site residue. H433 is a Zn(2+) binding site. N-linked (GlcNAc...) asparagine glycosylation occurs at N502.

The protein belongs to the peptidase M36 family. Zn(2+) is required as a cofactor.

The protein resides in the secreted. Functionally, secreted metalloproteinase that allows assimilation of proteinaceous substrates. The protein is Extracellular metalloproteinase 10 (MEP10) of Uncinocarpus reesii (strain UAMH 1704).